A 458-amino-acid polypeptide reads, in one-letter code: Exodeoxyribonuclease 7 large subunit (458 aa).

Belongs to the XseA family. In terms of assembly, heterooligomer composed of large and small subunits.

It localises to the cytoplasm. The enzyme catalyses Exonucleolytic cleavage in either 5'- to 3'- or 3'- to 5'-direction to yield nucleoside 5'-phosphates.. Bidirectionally degrades single-stranded DNA into large acid-insoluble oligonucleotides, which are then degraded further into small acid-soluble oligonucleotides. In Escherichia coli O17:K52:H18 (strain UMN026 / ExPEC), this protein is Exodeoxyribonuclease 7 large subunit.